The following is a 146-amino-acid chain: Hemoglobin subunit beta (146 aa).

Positions H2–H146 constitute a Globin domain. 2 residues coordinate heme b: H63 and H92.

It belongs to the globin family. In terms of assembly, heterotetramer of two alpha chains and two beta chains. In terms of tissue distribution, red blood cells.

Functionally, involved in oxygen transport from the lung to the various peripheral tissues. In Columba livia (Rock dove), this protein is Hemoglobin subunit beta (HBB).